The sequence spans 514 residues: 2,3-bisphosphoglycerate-independent phosphoglycerate mutase (514 aa).

Aspartate 14 and serine 64 together coordinate Mn(2+). Residue serine 64 is the Phosphoserine intermediate of the active site. Residues histidine 125, 155 to 156, arginine 187, arginine 193, 263 to 266, and lysine 336 contribute to the substrate site; these read RD and RADR. Mn(2+) is bound by residues aspartate 403, histidine 407, aspartate 444, histidine 445, and histidine 463.

The protein belongs to the BPG-independent phosphoglycerate mutase family. Monomer. Requires Mn(2+) as cofactor.

It carries out the reaction (2R)-2-phosphoglycerate = (2R)-3-phosphoglycerate. The protein operates within carbohydrate degradation; glycolysis; pyruvate from D-glyceraldehyde 3-phosphate: step 3/5. In terms of biological role, catalyzes the interconversion of 2-phosphoglycerate and 3-phosphoglycerate. The protein is 2,3-bisphosphoglycerate-independent phosphoglycerate mutase of Shigella flexneri.